We begin with the raw amino-acid sequence, 74 residues long: MKTATHPSYDEVRVQCACGNSFATRSTHKGDIHVEICSACHPFFTGKQKLMDTAGRVERFRRKYAKADKQADKQ.

Zn(2+) contacts are provided by Cys16, Cys18, Cys37, and Cys40.

Belongs to the bacterial ribosomal protein bL31 family. Type A subfamily. In terms of assembly, part of the 50S ribosomal subunit. The cofactor is Zn(2+).

Functionally, binds the 23S rRNA. This Koribacter versatilis (strain Ellin345) protein is Large ribosomal subunit protein bL31.